The primary structure comprises 117 residues: Immunoglobulin heavy variable 3-74 (117 aa).

A signal peptide spans 1–19; sequence MEFGLSWVFLVAILKGVQC. The tract at residues 20–44 is framework-1; sequence EVQLVESGGGLVQPGGSLRLSCAAS. The Ig-like domain maps to 20–117; the sequence is EVQLVESGGG…EDTAVYYCAR (98 aa). An intrachain disulfide couples Cys-41 to Cys-115. The interval 45 to 52 is complementarity-determining-1; the sequence is GFTFSSYW. The interval 53-69 is framework-2; it reads MHWVRQAPGKGLVWVSR. Residues 70–77 are complementarity-determining-2; it reads INSDGSST. A framework-3 region spans residues 78–115; that stretch reads SYADSVKGRFTISRDNAKNTLYLQMNSLRAEDTAVYYC. The tract at residues 116–117 is complementarity-determining-3; it reads AR.

In terms of assembly, immunoglobulins are composed of two identical heavy chains and two identical light chains; disulfide-linked.

It is found in the secreted. The protein localises to the cell membrane. Functionally, v region of the variable domain of immunoglobulin heavy chains that participates in the antigen recognition. Immunoglobulins, also known as antibodies, are membrane-bound or secreted glycoproteins produced by B lymphocytes. In the recognition phase of humoral immunity, the membrane-bound immunoglobulins serve as receptors which, upon binding of a specific antigen, trigger the clonal expansion and differentiation of B lymphocytes into immunoglobulins-secreting plasma cells. Secreted immunoglobulins mediate the effector phase of humoral immunity, which results in the elimination of bound antigens. The antigen binding site is formed by the variable domain of one heavy chain, together with that of its associated light chain. Thus, each immunoglobulin has two antigen binding sites with remarkable affinity for a particular antigen. The variable domains are assembled by a process called V-(D)-J rearrangement and can then be subjected to somatic hypermutations which, after exposure to antigen and selection, allow affinity maturation for a particular antigen. This chain is Immunoglobulin heavy variable 3-74, found in Homo sapiens (Human).